The sequence spans 152 residues: Large ribosomal subunit protein uL30 (152 aa).

It belongs to the universal ribosomal protein uL30 family. Part of the 50S ribosomal subunit.

In Methanosphaera stadtmanae (strain ATCC 43021 / DSM 3091 / JCM 11832 / MCB-3), this protein is Large ribosomal subunit protein uL30.